We begin with the raw amino-acid sequence, 535 residues long: MENKFMGRSLTVIDDLSIDERKYLFDKTKRLKKAIQEDDQKVMDEFRINDKDFGIYEVFLEPSTRTKESFRNAAKFHQVKLSDLAAESSSFNKGESYADTFNTLAGYQNSIFIVRSKVEGVCRWLEDEAQAFYQRNNLKRKPAFINAGDGKHEHPTQELLDEFTFIEDNNWSFDKIHIALVGDLYHGRTVHSKADGLKIFKSVKVDLIAPAELAMPEYYKVRMQENGFTVREFSSIEEYLRQADVALIWYFTRPQLERMGEQVLKKQDELRRSITFRKEFIEKLPENTRFYHPLPRHRVHPTIPTFLDATPLNGWERQSINGMYVRMVLLSMIAGKIGDDYKGPEPKSCERVEDEDYIVEVPINNSKESKVETFSEGVRPIQNGIVIDHICRGDKPSVIRHHMSKIINVMGLEEGKGGEWVSTSTKDKGTFKGIIFRPGEYKFSRADLKRLSAVASSCTLNLIKDGKIQSKYRTHLPPRIYNFEDLICKNEACISHPAQSEGVPAIFYRTIDNRYACQYCGTIHTFKEIWGEKKN.

Residues 1 to 341 form an aspartate carbamoyltransferase region; sequence MENKFMGRSL…MIAGKIGDDY (341 aa). Residues 342–370 form a linker region; that stretch reads KGPEPKSCERVEDEDYIVEVPINNSKESK. Positions 371-535 are aspartate carbamoyltransferase regulatory region; the sequence is VETFSEGVRP…FKEIWGEKKN (165 aa). 4 residues coordinate Zn(2+): Cys488, Cys493, Cys517, and Cys520.

In the N-terminal section; belongs to the aspartate/ornithine carbamoyltransferase superfamily. ATCase family. It in the C-terminal section; belongs to the PyrI family.

The enzyme catalyses carbamoyl phosphate + L-aspartate = N-carbamoyl-L-aspartate + phosphate + H(+). It functions in the pathway pyrimidine metabolism; UMP biosynthesis via de novo pathway; (S)-dihydroorotate from bicarbonate: step 2/3. This is Protein PyrBI (pyrBI) from Treponema denticola (strain ATCC 35405 / DSM 14222 / CIP 103919 / JCM 8153 / KCTC 15104).